Here is a 125-residue protein sequence, read N- to C-terminus: Aspartate 1-decarboxylase (125 aa).

S25 (schiff-base intermediate with substrate; via pyruvic acid) is an active-site residue. Position 25 is a pyruvic acid (Ser) (S25). T57 contacts substrate. Catalysis depends on Y58, which acts as the Proton donor. A substrate-binding site is contributed by 71 to 73 (GAA).

Belongs to the PanD family. As to quaternary structure, heterooctamer of four alpha and four beta subunits. Requires pyruvate as cofactor. In terms of processing, is synthesized initially as an inactive proenzyme, which is activated by self-cleavage at a specific serine bond to produce a beta-subunit with a hydroxyl group at its C-terminus and an alpha-subunit with a pyruvoyl group at its N-terminus.

The protein localises to the cytoplasm. It catalyses the reaction L-aspartate + H(+) = beta-alanine + CO2. The protein operates within cofactor biosynthesis; (R)-pantothenate biosynthesis; beta-alanine from L-aspartate: step 1/1. Its function is as follows. Catalyzes the pyruvoyl-dependent decarboxylation of aspartate to produce beta-alanine. The chain is Aspartate 1-decarboxylase from Hydrogenobaculum sp. (strain Y04AAS1).